The sequence spans 208 residues: 2-phospho-L-lactate guanylyltransferase (208 aa).

This sequence belongs to the CofC family. Homodimer.

It carries out the reaction (2S)-2-phospholactate + GTP + H(+) = (2S)-lactyl-2-diphospho-5'-guanosine + diphosphate. The protein operates within cofactor biosynthesis; coenzyme F420 biosynthesis. Its function is as follows. Guanylyltransferase that catalyzes the activation of (2S)-2-phospholactate (2-PL) as (2S)-lactyl-2-diphospho-5'-guanosine, via the condensation of 2-PL with GTP. It is involved in the biosynthesis of coenzyme F420, a hydride carrier cofactor. The polypeptide is 2-phospho-L-lactate guanylyltransferase (Methanosarcina acetivorans (strain ATCC 35395 / DSM 2834 / JCM 12185 / C2A)).